Here is a 245-residue protein sequence, read N- to C-terminus: Nisin immunity protein (245 aa).

An N-terminal signal peptide occupies residues 1 to 19; it reads MRRYLILIVALIGITGLSG. The N-palmitoyl cysteine moiety is linked to residue C20. C20 carries S-diacylglycerol cysteine lipidation.

It is found in the cell membrane. In terms of biological role, involved in immunity against exogenously supplied nisin. The chain is Nisin immunity protein (nisI) from Lactococcus lactis subsp. lactis (Streptococcus lactis).